A 463-amino-acid polypeptide reads, in one-letter code: tRNA-2-methylthio-N(6)-dimethylallyladenosine synthase (463 aa).

In terms of domain architecture, MTTase N-terminal spans 5-125 (RKLHIKSYGC…LPQLLAKAEQ (121 aa)). 6 residues coordinate [4Fe-4S] cluster: cysteine 14, cysteine 50, cysteine 88, cysteine 166, cysteine 170, and cysteine 173. Residues 152-384 (RARGISAFVT…QQLIDQQQSA (233 aa)) enclose the Radical SAM core domain. One can recognise a TRAM domain in the interval 387–449 (KAAIGRTVEV…RYSLLGELAS (63 aa)).

Belongs to the methylthiotransferase family. MiaB subfamily. In terms of assembly, monomer. [4Fe-4S] cluster is required as a cofactor.

The protein resides in the cytoplasm. The catalysed reaction is N(6)-dimethylallyladenosine(37) in tRNA + (sulfur carrier)-SH + AH2 + 2 S-adenosyl-L-methionine = 2-methylsulfanyl-N(6)-dimethylallyladenosine(37) in tRNA + (sulfur carrier)-H + 5'-deoxyadenosine + L-methionine + A + S-adenosyl-L-homocysteine + 2 H(+). Its function is as follows. Catalyzes the methylthiolation of N6-(dimethylallyl)adenosine (i(6)A), leading to the formation of 2-methylthio-N6-(dimethylallyl)adenosine (ms(2)i(6)A) at position 37 in tRNAs that read codons beginning with uridine. This is tRNA-2-methylthio-N(6)-dimethylallyladenosine synthase from Rhodopseudomonas palustris (strain ATCC BAA-98 / CGA009).